The sequence spans 198 residues: 7-methyl-GTP pyrophosphatase (198 aa).

D69 acts as the Proton acceptor in catalysis.

This sequence belongs to the Maf family. YceF subfamily. A divalent metal cation is required as a cofactor.

It is found in the cytoplasm. It catalyses the reaction N(7)-methyl-GTP + H2O = N(7)-methyl-GMP + diphosphate + H(+). In terms of biological role, nucleoside triphosphate pyrophosphatase that hydrolyzes 7-methyl-GTP (m(7)GTP). May have a dual role in cell division arrest and in preventing the incorporation of modified nucleotides into cellular nucleic acids. The chain is 7-methyl-GTP pyrophosphatase from Yersinia pestis bv. Antiqua (strain Antiqua).